A 563-amino-acid polypeptide reads, in one-letter code: CTP synthase (563 aa).

Residues 1–280 (MTKFVFVTGG…DEMICMKLQL (280 aa)) form an amidoligase domain region. Residue S13 coordinates CTP. S13 serves as a coordination point for UTP. ATP contacts are provided by residues 14–19 (SLGKGI) and D71. Mg(2+)-binding residues include D71 and E154. Residues 161 to 163 (DIE), 201 to 206 (KTKPTQ), and K237 each bind CTP. Residues 201 to 206 (KTKPTQ) and K237 each bind UTP. In terms of domain architecture, Glutamine amidotransferase type-1 spans 305–557 (TIAMAGKYTE…IAAALEHHAA (253 aa)). G366 contributes to the L-glutamine binding site. The active-site Nucleophile; for glutamine hydrolysis is C393. L-glutamine-binding positions include 394-397 (LGMQ), E417, and R483. Active-site residues include H530 and E532.

The protein belongs to the CTP synthase family. In terms of assembly, homotetramer.

The enzyme catalyses UTP + L-glutamine + ATP + H2O = CTP + L-glutamate + ADP + phosphate + 2 H(+). The catalysed reaction is L-glutamine + H2O = L-glutamate + NH4(+). It carries out the reaction UTP + NH4(+) + ATP = CTP + ADP + phosphate + 2 H(+). It participates in pyrimidine metabolism; CTP biosynthesis via de novo pathway; CTP from UDP: step 2/2. Allosterically activated by GTP, when glutamine is the substrate; GTP has no effect on the reaction when ammonia is the substrate. The allosteric effector GTP functions by stabilizing the protein conformation that binds the tetrahedral intermediate(s) formed during glutamine hydrolysis. Inhibited by the product CTP, via allosteric rather than competitive inhibition. Catalyzes the ATP-dependent amination of UTP to CTP with either L-glutamine or ammonia as the source of nitrogen. Regulates intracellular CTP levels through interactions with the four ribonucleotide triphosphates. The protein is CTP synthase of Leptothrix cholodnii (strain ATCC 51168 / LMG 8142 / SP-6) (Leptothrix discophora (strain SP-6)).